Here is a 176-residue protein sequence, read N- to C-terminus: Salivary antigen 1 (176 aa).

Positions 1-18 are cleaved as a signal peptide; that stretch reads MNYCFLVFLVYLVFAVNG.

Its subcellular location is the secreted. This is Salivary antigen 1 from Ctenocephalides felis (Cat flea).